Consider the following 348-residue polypeptide: MNGTEGPNFYVPFSNITGVVRSPFEQPQYYLAEPWQFSMLAAYMFLLIVLGFPINFLTLYVTVQHKKLRTPLNYILLNLAVADLFMVFGGFTTTLYTSLHGYFVFGPTGCNLEGFFATLGGEIGLWSLVVLAIERYVVVCKPMSNFRFGENHAIMGVAFTWVMALACAAPPLVGWSRYIPEGMQCSCGIDYYTLKPEVNNESFVIYMFVVHFTIPMIVIFFCYGQLVFTVKEAAAQQQESATTQKAEKEVTRMVIIMVIFFLICWLPYASVAMYIFTHQGSNFGPIFMTLPAFFAKTASIYNPIIYIMMNKQFRNCMLTSLCCGKNPLGDDEASATASKTETSQVAPA.

N-acetylmethionine is present on Met1. Topologically, residues Met1–Gln36 are extracellular. N-linked (GlcNAc...) asparagine glycans are attached at residues Asn2 and Asn15. The helical transmembrane segment at Phe37–Val61 threads the bilayer. Over Thr62–Asn73 the chain is Cytoplasmic. Residues Tyr74–Tyr96 form a helical membrane-spanning segment. At Thr97–Cys110 the chain is on the extracellular side. A disulfide bridge connects residues Cys110 and Cys187. Residues Asn111–Ile133 form a helical membrane-spanning segment. The 'Ionic lock' involved in activated form stabilization motif lies at Glu134–Tyr136. The Cytoplasmic segment spans residues Glu134 to His152. Residues Ala153 to Val173 form a helical membrane-spanning segment. Residues Gly174–Ser202 lie on the Extracellular side of the membrane. Zn(2+) is bound at residue Glu201. The chain crosses the membrane as a helical span at residues Phe203–Gly224. Residues Gln225–Arg252 are Cytoplasmic-facing. A helical transmembrane segment spans residues Met253–Tyr274. At Ile275–Ile286 the chain is on the extracellular side. Gln279 is a binding site for Zn(2+). A helical transmembrane segment spans residues Phe287 to Met308. Lys296 carries the post-translational modification N6-(retinylidene)lysine. Topologically, residues Met309–Ala348 are cytoplasmic. Residues Cys322 and Cys323 are each lipidated (S-palmitoyl cysteine). Positions Asp330–Ala348 are interaction with SAG. Ser334 is modified (phosphoserine). At Thr336 the chain carries Phosphothreonine. At Ser338 the chain carries Phosphoserine. 2 positions are modified to phosphothreonine: Thr340 and Thr342. At Ser343 the chain carries Phosphoserine.

It belongs to the G-protein coupled receptor 1 family. Opsin subfamily. In terms of assembly, homodimer. May form a complex composed of RHO, GRK1 and RCVRN in a Ca(2+)-dependent manner; RCVRN prevents the interaction between GRK1 and RHO. Interacts with GRK1. Interacts (phosphorylated form) with SAG. Interacts with GNAT1. Interacts with GNAT3. SAG and G-proteins compete for a common binding site. Interacts with PRCD; the interaction promotes PRCD stability. Forms a complex with ASAP1 and ARF4. Forms a complex with ASAP1, RAB11A, Rabin8/RAB3IP, ARF4 and RAB11FIP3; the complex regulates Golgi-to-cilia rhodopsin/RHO transport in photoreceptors. In terms of processing, phosphorylated on some or all of the serine and threonine residues present in the C-terminal region. Post-translationally, contains one covalently linked retinal chromophore. Upon light absorption, the covalently bound 11-cis-retinal is converted to all-trans-retinal. After hydrolysis of the Schiff base and release of the covalently bound all-trans-retinal, active rhodopsin is regenerated by binding of a fresh molecule of 11-cis-retinal.

It localises to the membrane. The protein resides in the cell projection. The protein localises to the cilium. It is found in the photoreceptor outer segment. Functionally, photoreceptor required for image-forming vision at low light intensity. Required for photoreceptor cell viability after birth. Light-induced isomerization of 11-cis to all-trans retinal triggers a conformational change that activates signaling via G-proteins. Subsequent receptor phosphorylation mediates displacement of the bound G-protein alpha subunit by the arrestin SAG and terminates signaling. This is Rhodopsin (Rho) from Rattus norvegicus (Rat).